Here is a 597-residue protein sequence, read N- to C-terminus: 2-succinyl-5-enolpyruvyl-6-hydroxy-3-cyclohexene-1-carboxylate synthase (597 aa).

The protein belongs to the TPP enzyme family. MenD subfamily. In terms of assembly, homodimer. The cofactor is Mg(2+). It depends on Mn(2+) as a cofactor. Thiamine diphosphate serves as cofactor.

It carries out the reaction isochorismate + 2-oxoglutarate + H(+) = 5-enolpyruvoyl-6-hydroxy-2-succinyl-cyclohex-3-ene-1-carboxylate + CO2. Its pathway is quinol/quinone metabolism; 1,4-dihydroxy-2-naphthoate biosynthesis; 1,4-dihydroxy-2-naphthoate from chorismate: step 2/7. It functions in the pathway cofactor biosynthesis; phylloquinone biosynthesis. Functionally, catalyzes the thiamine diphosphate-dependent decarboxylation of 2-oxoglutarate and the subsequent addition of the resulting succinic semialdehyde-thiamine pyrophosphate anion to isochorismate to yield 2-succinyl-5-enolpyruvyl-6-hydroxy-3-cyclohexene-1-carboxylate (SEPHCHC). The sequence is that of 2-succinyl-5-enolpyruvyl-6-hydroxy-3-cyclohexene-1-carboxylate synthase from Synechococcus sp. (strain JA-3-3Ab) (Cyanobacteria bacterium Yellowstone A-Prime).